The sequence spans 153 residues: ATP synthase subunit a (153 aa).

2 helical membrane-spanning segments follow: residues 43–63 (AFHL…LLIF) and 104–124 (IAPL…VDLI).

Belongs to the ATPase A chain family. F-type ATPases have 2 components, CF(1) - the catalytic core - and CF(0) - the membrane proton channel. CF(1) has five subunits: alpha(3), beta(3), gamma(1), delta(1), epsilon(1). CF(0) has three main subunits: a(1), b(2) and c(9-12). The alpha and beta chains form an alternating ring which encloses part of the gamma chain. CF(1) is attached to CF(0) by a central stalk formed by the gamma and epsilon chains, while a peripheral stalk is formed by the delta and b chains.

Its subcellular location is the cell inner membrane. Its function is as follows. Key component of the proton channel; it plays a direct role in the translocation of protons across the membrane. This is ATP synthase subunit a (atpB) from Pseudomonas putida (Arthrobacter siderocapsulatus).